The following is a 231-amino-acid chain: Transmembrane gamma-carboxyglutamic acid protein 3 (231 aa).

Positions 1–19 are excised as a propeptide; it reads MAVFLEAKDAHSVLKRFPR. Positions 20 to 65 constitute a Gla domain; it reads ANEFLEELRQGTIERECMEEICSYEEVKEVFENKEKTMEFWKGYPN. At 20–78 the chain is on the extracellular side; it reads ANEFLEELRQGTIERECMEEICSYEEVKEVFENKEKTMEFWKGYPNAVYSVRDPSQSSD. A 4-carboxyglutamate mark is found at Glu-22, Glu-25, Glu-26, Glu-33, Glu-35, Glu-38, Glu-39, Glu-44, Glu-45, Glu-48, Glu-51, Glu-54, and Glu-58. A disulfide bond links Cys-36 and Cys-41. Residues 79 to 101 form a helical membrane-spanning segment; it reads AMYVVVPLLGVALLIVIALFIIW. Residues 102–231 are Cytoplasmic-facing; the sequence is RCQLQKATRH…IVAANPGADK (130 aa). 2 disordered regions span residues 140–165 and 182–231; these read HSQGEPSGHREAANSPQVVLGPSRGG and LSRL…GADK. Low complexity predominate over residues 202-213; that stretch reads ESSSEEASVSYS.

In terms of processing, gla residues are produced after subsequent post-translational modifications of glutamate by a vitamin K-dependent gamma-carboxylase. Expressed in brain, lung, kidney and heart.

It is found in the membrane. This is Transmembrane gamma-carboxyglutamic acid protein 3 (PRRG3) from Homo sapiens (Human).